A 235-amino-acid chain; its full sequence is MTNQLIYTGKAKDIYSTKDENMIRTVYKDQATMLNGARKETIDGKGALNNQISSLIFEKLNMAGVVTHYIEQISKNEQLNKKVDIIPLEVVLRNVTAGSFSKRFGVEEGRVLETPIVEFYYKNDDLNDPFINDEHVKFLGIVNDEEIAYLKGETRRINELLKDWFAQIGINLIDFKLEFGFDNDGKIILADEFSPDNCRLWDAEGNHMDKDIFRRDLGSLTDAYQVVLDKLKTLD.

This sequence belongs to the SAICAR synthetase family.

It catalyses the reaction 5-amino-1-(5-phospho-D-ribosyl)imidazole-4-carboxylate + L-aspartate + ATP = (2S)-2-[5-amino-1-(5-phospho-beta-D-ribosyl)imidazole-4-carboxamido]succinate + ADP + phosphate + 2 H(+). It functions in the pathway purine metabolism; IMP biosynthesis via de novo pathway; 5-amino-1-(5-phospho-D-ribosyl)imidazole-4-carboxamide from 5-amino-1-(5-phospho-D-ribosyl)imidazole-4-carboxylate: step 1/2. This chain is Phosphoribosylaminoimidazole-succinocarboxamide synthase, found in Streptococcus agalactiae serotype Ia (strain ATCC 27591 / A909 / CDC SS700).